The sequence spans 257 residues: Acetylglutamate kinase (257 aa).

Residues 43–44 (GG), R65, and N157 each bind substrate.

This sequence belongs to the acetylglutamate kinase family. ArgB subfamily.

The protein resides in the cytoplasm. It carries out the reaction N-acetyl-L-glutamate + ATP = N-acetyl-L-glutamyl 5-phosphate + ADP. Its pathway is amino-acid biosynthesis; L-arginine biosynthesis; N(2)-acetyl-L-ornithine from L-glutamate: step 2/4. Catalyzes the ATP-dependent phosphorylation of N-acetyl-L-glutamate. This chain is Acetylglutamate kinase, found in Pasteurella multocida (strain Pm70).